We begin with the raw amino-acid sequence, 70 residues long: Dermaseptin-H3 (70 aa).

The first 22 residues, 1-22, serve as a signal peptide directing secretion; the sequence is MAFLKKSLFLVLFLGMVSLSIC. Residues 23 to 43 constitute a propeptide that is removed on maturation; it reads EEEKRENEDEELQEDDEQSEM. Residues 25 to 44 are disordered; that stretch reads EKRENEDEELQEDDEQSEMK. Positions 30-40 are enriched in acidic residues; sequence EDEELQEDDEQ. Position 70 is a leucine amide (leucine 70).

Expressed by the skin glands.

It is found in the secreted. Functionally, has antibacterial activity against the Gram-negative bacteria E.coli and P.aeruginosa, and the Gram-positive bacteria S.aureus and M.luteus. Has antiprotozoal activity against L.amazonensis. No hemolytic activity. The sequence is that of Dermaseptin-H3 from Pithecopus hypochondrialis (Orange-legged leaf frog).